Consider the following 350-residue polypeptide: MKALVLEEKGKLSLRDFDIPGGAGSGELGPKDVRIRTHTVGICGSDVHYYTHGKIGHFVVNAPMVLGHEASGTVIETGSDVTHLKIGDRVCMEPGIPDPTSRASKLGIYNVDPAVRFWATPPIHGCLTPEVIHPAAFTYKLPDNVSFAEGAMVEPFAIGMQAALRARIQPGDIAVVTGAGPIGMMVALAALAGGCAKVIVADLAQPKLDIIAAYDGIETINIRERNLAEAVSAATDGWGCDIVFECSGAAPAILGMAKLARPGGAIVLVGMPVDPVPVDIVGLQAKELRVETVFRYANVYDRAVALIASGKVDLKPLISATIPFEDSIAGFDRAVEARETDVKLQIVMPQ.

Residues Cys43, His68, and Glu154 each contribute to the Zn(2+) site.

The protein belongs to the zinc-containing alcohol dehydrogenase family. The cofactor is Zn(2+).

It carries out the reaction xylitol + NAD(+) = D-xylulose + NADH + H(+). The sequence is that of Putative D-xylulose reductase from Agrobacterium fabrum (strain C58 / ATCC 33970) (Agrobacterium tumefaciens (strain C58)).